We begin with the raw amino-acid sequence, 333 residues long: Glutamyl-tRNA reductase (333 aa).

Substrate-binding positions include Thr60–Arg63, Ser110, Glu115–Glu117, and Gln121. Catalysis depends on Cys61, which acts as the Nucleophile. Residue Gly189–Asn194 participates in NADP(+) binding.

Belongs to the glutamyl-tRNA reductase family. As to quaternary structure, homodimer.

It catalyses the reaction (S)-4-amino-5-oxopentanoate + tRNA(Glu) + NADP(+) = L-glutamyl-tRNA(Glu) + NADPH + H(+). It functions in the pathway porphyrin-containing compound metabolism; protoporphyrin-IX biosynthesis; 5-aminolevulinate from L-glutamyl-tRNA(Glu): step 1/2. Functionally, catalyzes the NADPH-dependent reduction of glutamyl-tRNA(Glu) to glutamate 1-semialdehyde (GSA). The chain is Glutamyl-tRNA reductase from Chlamydia muridarum (strain MoPn / Nigg).